We begin with the raw amino-acid sequence, 281 residues long: NADPH-dependent 7-cyano-7-deazaguanine reductase (281 aa).

Substrate is bound at residue 81 to 83; sequence IES. 83 to 84 lines the NADPH pocket; the sequence is SK. Cys188 acts as the Thioimide intermediate in catalysis. Catalysis depends on Asp195, which acts as the Proton donor. 227 to 228 provides a ligand contact to substrate; the sequence is HE. 256 to 257 contributes to the NADPH binding site; the sequence is RG.

This sequence belongs to the GTP cyclohydrolase I family. QueF type 2 subfamily. As to quaternary structure, homodimer.

The protein resides in the cytoplasm. The catalysed reaction is 7-aminomethyl-7-carbaguanine + 2 NADP(+) = 7-cyano-7-deazaguanine + 2 NADPH + 3 H(+). Its pathway is tRNA modification; tRNA-queuosine biosynthesis. In terms of biological role, catalyzes the NADPH-dependent reduction of 7-cyano-7-deazaguanine (preQ0) to 7-aminomethyl-7-deazaguanine (preQ1). The sequence is that of NADPH-dependent 7-cyano-7-deazaguanine reductase from Polaromonas naphthalenivorans (strain CJ2).